The chain runs to 330 residues: Aspartate--ammonia ligase (330 aa).

Belongs to the class-II aminoacyl-tRNA synthetase family. AsnA subfamily.

It is found in the cytoplasm. It carries out the reaction L-aspartate + NH4(+) + ATP = L-asparagine + AMP + diphosphate + H(+). Its pathway is amino-acid biosynthesis; L-asparagine biosynthesis; L-asparagine from L-aspartate (ammonia route): step 1/1. The sequence is that of Aspartate--ammonia ligase from Actinobacillus pleuropneumoniae serotype 7 (strain AP76).